Here is a 901-residue protein sequence, read N- to C-terminus: Core protein VP3 (901 aa).

The protein belongs to the orbivirus VP3 family.

The protein resides in the virion. The VP3 protein is one of the five proteins (with VP1, VP4, VP6 and VP7) which form the inner capsid of the virus. The sequence is that of Core protein VP3 (Segment-3) from Antilocapra americana (Pronghorn).